The primary structure comprises 285 residues: 3-methyl-2-oxobutanoate hydroxymethyltransferase (285 aa).

Residues 1–22 (MSEHNVYGAAQPAQPGQPAQPR) form a disordered region. The span at 8 to 21 (GAAQPAQPGQPAQP) shows a compositional bias: low complexity. Mg(2+) is bound by residues D66 and D105. Residues 66 to 67 (DS), D105, and K135 contribute to the 3-methyl-2-oxobutanoate site. Residue E137 coordinates Mg(2+). E203 serves as the catalytic Proton acceptor.

Belongs to the PanB family. In terms of assembly, homodecamer; pentamer of dimers. Mg(2+) is required as a cofactor.

It is found in the cytoplasm. The catalysed reaction is 3-methyl-2-oxobutanoate + (6R)-5,10-methylene-5,6,7,8-tetrahydrofolate + H2O = 2-dehydropantoate + (6S)-5,6,7,8-tetrahydrofolate. It functions in the pathway cofactor biosynthesis; (R)-pantothenate biosynthesis; (R)-pantoate from 3-methyl-2-oxobutanoate: step 1/2. Catalyzes the reversible reaction in which hydroxymethyl group from 5,10-methylenetetrahydrofolate is transferred onto alpha-ketoisovalerate to form ketopantoate. The polypeptide is 3-methyl-2-oxobutanoate hydroxymethyltransferase (Mycolicibacterium paratuberculosis (strain ATCC BAA-968 / K-10) (Mycobacterium paratuberculosis)).